A 145-amino-acid polypeptide reads, in one-letter code: Protein SprT-like (145 aa).

One can recognise a SprT-like domain in the interval 5 to 140; the sequence is DYVREVSLAD…ACGRCHGRLI (136 aa). Histidine 64 serves as a coordination point for Zn(2+). Residue glutamate 65 is part of the active site. A Zn(2+)-binding site is contributed by histidine 68.

The protein belongs to the SprT family. Zn(2+) serves as cofactor.

The protein localises to the cytoplasm. This is Protein SprT-like from Streptococcus equi subsp. equi (strain 4047).